Here is a 508-residue protein sequence, read N- to C-terminus: MKEEVLGLPIDKIEKKIKEYDFSPRISNIGYVKHVGDGVAEVSLLNSAFIGEMVVFESGIQGMVLSLKEDSVGVILFGKDEYVKEGDVVYSTSKILQVPTGNGFLGRVIDPLGNPIDGGGLIFPEAYVPIDNEAPSIFDREPVKEPLYTGIRTIDALIPIGHGQRELILGDRQTGKTTIALDTIISQKNYGTICIYVAIAQKRTNIARIVQTLREYGALSNTIVIATFPDEPPALRYIAPMAGCAMGEYFMRQGERVLIVYDDLTKHANTYREVALLLRRVPGREAYPGDIFYLHAHLLERAAKLNKRLGGGALTALPIAETLSGEISTYIPTNLISITDGQIYLDTNLFNAGIRPAINVGLSVSRVGGSAQPKGMRQVAGRLRLDLAQYREYAMFLEFGTELDMATKKKIERGRRVEELLKQGAHEVQPIEEQIISFYLANGGFLDNYPVEKVKDVVIKYIAYLKLKYSSVLTFLREELQLSDQIIYQLHNIFQEFEKEVYANSTGS.

170–177 serves as a coordination point for ATP; it reads GDRQTGKT.

Belongs to the ATPase alpha/beta chains family. In terms of assembly, F-type ATPases have 2 components, CF(1) - the catalytic core - and CF(0) - the membrane proton channel. CF(1) has five subunits: alpha(3), beta(3), gamma(1), delta(1), epsilon(1). CF(0) has three main subunits: a(1), b(2) and c(9-12). The alpha and beta chains form an alternating ring which encloses part of the gamma chain. CF(1) is attached to CF(0) by a central stalk formed by the gamma and epsilon chains, while a peripheral stalk is formed by the delta and b chains.

The protein localises to the cell inner membrane. The enzyme catalyses ATP + H2O + 4 H(+)(in) = ADP + phosphate + 5 H(+)(out). Functionally, produces ATP from ADP in the presence of a proton gradient across the membrane. The alpha chain is a regulatory subunit. The protein is ATP synthase subunit alpha of Dictyoglomus turgidum (strain DSM 6724 / Z-1310).